A 489-amino-acid chain; its full sequence is Protein nucleotidyltransferase YdiU (489 aa).

Gly-88, Gly-90, Arg-91, Lys-111, Asp-123, Gly-124, Arg-174, and Arg-181 together coordinate ATP. Asp-250 acts as the Proton acceptor in catalysis. Asn-251 and Asp-260 together coordinate Mg(2+). Asp-260 lines the ATP pocket.

It belongs to the SELO family. Mg(2+) serves as cofactor. Requires Mn(2+) as cofactor.

The catalysed reaction is L-seryl-[protein] + ATP = 3-O-(5'-adenylyl)-L-seryl-[protein] + diphosphate. It carries out the reaction L-threonyl-[protein] + ATP = 3-O-(5'-adenylyl)-L-threonyl-[protein] + diphosphate. It catalyses the reaction L-tyrosyl-[protein] + ATP = O-(5'-adenylyl)-L-tyrosyl-[protein] + diphosphate. The enzyme catalyses L-histidyl-[protein] + UTP = N(tele)-(5'-uridylyl)-L-histidyl-[protein] + diphosphate. The catalysed reaction is L-seryl-[protein] + UTP = O-(5'-uridylyl)-L-seryl-[protein] + diphosphate. It carries out the reaction L-tyrosyl-[protein] + UTP = O-(5'-uridylyl)-L-tyrosyl-[protein] + diphosphate. Its function is as follows. Nucleotidyltransferase involved in the post-translational modification of proteins. It can catalyze the addition of adenosine monophosphate (AMP) or uridine monophosphate (UMP) to a protein, resulting in modifications known as AMPylation and UMPylation. The chain is Protein nucleotidyltransferase YdiU from Vibrio parahaemolyticus serotype O3:K6 (strain RIMD 2210633).